Consider the following 248-residue polypeptide: 5'-nucleotidase SurE (248 aa).

The a divalent metal cation site is built by Asp8, Asp9, Ser39, and Asn91.

The protein belongs to the SurE nucleotidase family. A divalent metal cation serves as cofactor.

It localises to the cytoplasm. The catalysed reaction is a ribonucleoside 5'-phosphate + H2O = a ribonucleoside + phosphate. Its function is as follows. Nucleotidase that shows phosphatase activity on nucleoside 5'-monophosphates. This is 5'-nucleotidase SurE from Neisseria gonorrhoeae (strain ATCC 700825 / FA 1090).